Here is a 302-residue protein sequence, read N- to C-terminus: tRNA pseudouridine synthase B (302 aa).

The active-site Nucleophile is Asp-45.

It belongs to the pseudouridine synthase TruB family. Type 1 subfamily.

It carries out the reaction uridine(55) in tRNA = pseudouridine(55) in tRNA. Its function is as follows. Responsible for synthesis of pseudouridine from uracil-55 in the psi GC loop of transfer RNAs. This Francisella tularensis subsp. tularensis (strain FSC 198) protein is tRNA pseudouridine synthase B.